Here is a 313-residue protein sequence, read N- to C-terminus: Glyoxylate/hydroxypyruvate reductase A (313 aa).

Arginine 228 is an active-site residue. The active-site Proton donor is histidine 276.

Belongs to the D-isomer specific 2-hydroxyacid dehydrogenase family. GhrA subfamily.

It is found in the cytoplasm. The enzyme catalyses glycolate + NADP(+) = glyoxylate + NADPH + H(+). It carries out the reaction (R)-glycerate + NAD(+) = 3-hydroxypyruvate + NADH + H(+). It catalyses the reaction (R)-glycerate + NADP(+) = 3-hydroxypyruvate + NADPH + H(+). Catalyzes the NADPH-dependent reduction of glyoxylate and hydroxypyruvate into glycolate and glycerate, respectively. The chain is Glyoxylate/hydroxypyruvate reductase A from Photorhabdus laumondii subsp. laumondii (strain DSM 15139 / CIP 105565 / TT01) (Photorhabdus luminescens subsp. laumondii).